A 263-amino-acid polypeptide reads, in one-letter code: GTP cyclohydrolase 1 type 2 homolog (263 aa).

Residues His76, His77, Asp113, His231, and Glu235 each contribute to the a divalent metal cation site.

Belongs to the GTP cyclohydrolase I type 2/NIF3 family. In terms of assembly, homohexamer.

The protein is GTP cyclohydrolase 1 type 2 homolog of Deinococcus radiodurans (strain ATCC 13939 / DSM 20539 / JCM 16871 / CCUG 27074 / LMG 4051 / NBRC 15346 / NCIMB 9279 / VKM B-1422 / R1).